The chain runs to 66 residues: MKKDIHPEYVECTVTCACGNTFTSKSNKSEIRVDICSECHPFFTGSEKIVDSAGRVDKFKKKYNMK.

Residues C16, C18, C36, and C39 each contribute to the Zn(2+) site.

The protein belongs to the bacterial ribosomal protein bL31 family. Type A subfamily. Part of the 50S ribosomal subunit. Zn(2+) is required as a cofactor.

In terms of biological role, binds the 23S rRNA. The chain is Large ribosomal subunit protein bL31 from Campylobacter fetus subsp. fetus (strain 82-40).